Consider the following 453-residue polypeptide: Probable exopolygalacturonase B (453 aa).

The signal sequence occupies residues 1–16 (MKFLALAALFASTVSS). Residues Asn-185 and Asn-225 are each glycosylated (N-linked (GlcNAc...) asparagine). Asp-255 acts as the Proton donor in catalysis. Cys-257 and Cys-274 are disulfide-bonded. Residues Asn-263 and Asn-275 are each glycosylated (N-linked (GlcNAc...) asparagine). His-278 is a catalytic residue. PbH1 repeat units follow at residues 295–316 (IENV…RLKA) and 327–348 (INNV…VLDQ). 4 N-linked (GlcNAc...) asparagine glycosylation sites follow: Asn-302, Asn-329, Asn-354, and Asn-366. A PbH1 3 repeat occupies 362–405 (PSRVNFTNIVFENIYGTSSGKHGKVVADLTCSPNAVCSGIRLKN). Cys-392 and Cys-398 are joined by a disulfide. The N-linked (GlcNAc...) asparagine glycan is linked to Asn-436.

It belongs to the glycosyl hydrolase 28 family.

The protein localises to the secreted. The catalysed reaction is [(1-&gt;4)-alpha-D-galacturonosyl](n) + H2O = alpha-D-galacturonate + [(1-&gt;4)-alpha-D-galacturonosyl](n-1). Specific in hydrolyzing the terminal glycosidic bond of polygalacturonic acid and oligogalacturonates. This chain is Probable exopolygalacturonase B (pgxB), found in Neosartorya fischeri (strain ATCC 1020 / DSM 3700 / CBS 544.65 / FGSC A1164 / JCM 1740 / NRRL 181 / WB 181) (Aspergillus fischerianus).